A 381-amino-acid polypeptide reads, in one-letter code: Short-chain dehydrogenase anuD (381 aa).

6 residues coordinate NADP(+): I84, K109, D133, N158, Y244, and K248. Y244 acts as the Proton acceptor in catalysis. Y244 serves as the catalytic Proton donor. Residue K248 is the Lowers pKa of active site Tyr of the active site.

This sequence belongs to the short-chain dehydrogenases/reductases (SDR) family.

Its function is as follows. Highly reducing polyketide synthase; part of the gene cluster that mediates the biosynthesis of annullatin D, an alkylated aromatic polyketide with a fused dihydrobenzofuran lactone ring system that exhibits potent agonistic activities toward the cannabinoid receptors. AnuD does not seem to play a role within the pathway. The annullatin backbone 2-hydroxymethyl-3-pentylphenol is assembled from one acetyl-CoA starter unit and 5 malonyl-CoA elongation units by cooperation of the highly reducing polyketide synthase anuA, the short-chain dehydrogenase anuB and the oxidoreductase anuC, before being hydroxylated at the C-5 alkyl chain by the cytochrome P450 monooxygenase anuE to form (8S)-annullatin E. The prenyltransferase anuH subsequently installs one isoprenyl group at the benzene ring to form (8S)-annullatin J. Enzymatic or nonenzymatic dihydro-benzofuran ring formation between the prenyl and the phenolic hydroxyl groups in (8S)-annullatin J results in two diastereomers (2S,9S)-annullatin H and compound 12. The intermediate (2S,9S)-annullatin H is then converted to (2S,9S)-annullatin D by the FAD-linked oxidoreductase anuG-catalyzed five-member lactone ring formation. The isomer 12 acts as a substrate for the short-chain dehydrogenase anuF and is oxidized to (2R)-annullatin F, which is subsequently acetylated by an acetyltransferase leading to (2R)-annullatin G formation. The remaining enzymes identified within the cluster, anuD, anuI and anuJ, seem not to be involved in annullatin biosynthesis. In Penicillium roqueforti (strain FM164), this protein is Short-chain dehydrogenase anuD.